We begin with the raw amino-acid sequence, 379 residues long: Protein-glutamate methylesterase/protein-glutamine glutaminase (379 aa).

The Response regulatory domain maps to 4–121 (KILVVDDSIF…AANRQDAVAL (118 aa)). D55 is subject to 4-aspartylphosphate. The CheB-type methylesterase domain maps to 186 to 379 (SGKKYRCLAI…FESHILKEMA (194 aa)). Catalysis depends on residues S198, H225, and D323.

Belongs to the CheB family. In terms of processing, phosphorylated by CheA. Phosphorylation of the N-terminal regulatory domain activates the methylesterase activity.

It localises to the cytoplasm. The enzyme catalyses [protein]-L-glutamate 5-O-methyl ester + H2O = L-glutamyl-[protein] + methanol + H(+). It catalyses the reaction L-glutaminyl-[protein] + H2O = L-glutamyl-[protein] + NH4(+). In terms of biological role, involved in chemotaxis. Part of a chemotaxis signal transduction system that modulates chemotaxis in response to various stimuli. Catalyzes the demethylation of specific methylglutamate residues introduced into the chemoreceptors (methyl-accepting chemotaxis proteins or MCP) by CheR. Also mediates the irreversible deamidation of specific glutamine residues to glutamic acid. This chain is Protein-glutamate methylesterase/protein-glutamine glutaminase, found in Pseudoalteromonas atlantica (strain T6c / ATCC BAA-1087).